We begin with the raw amino-acid sequence, 232 residues long: Flagellar L-ring protein (232 aa).

The first 15 residues, 1–15 (MKKVLFYVLPFAFFG), serve as a signal peptide directing secretion. A lipid anchor (N-palmitoyl cysteine) is attached at cysteine 16. Residue cysteine 16 is the site of S-diacylglycerol cysteine attachment.

The protein belongs to the FlgH family. As to quaternary structure, the basal body constitutes a major portion of the flagellar organelle and consists of four rings (L,P,S, and M) mounted on a central rod.

Its subcellular location is the cell outer membrane. The protein localises to the bacterial flagellum basal body. Its function is as follows. Assembles around the rod to form the L-ring and probably protects the motor/basal body from shearing forces during rotation. This chain is Flagellar L-ring protein, found in Campylobacter jejuni subsp. jejuni serotype O:6 (strain 81116 / NCTC 11828).